An 808-amino-acid polypeptide reads, in one-letter code: MNVHGCPRIAACRCTDTHPRGRPAFAYRWFVPKTTRAQPGRLSSRFWRLLGASTEKNRSRSLADVTASAEYDKEAADLSDEKLRKAAGLLNLDDLAESADIPQFLAIAREAAERRTGLRPFDVQLLGALRMLAGDVIEMATGEGKTLAGAIAAAGYALAGRHVHVVTINDYLARRDAEWMGPLLDAMGLTVGWITADSTPDERRTAYDRDVTYASVNEIGFDVLRDQLVTDVNDLVSPNPDVALIDEADSVLVDEALVPLVLAGTTHRETPRLEIIRLVAELVGDKDADEYFATDSDNRNVHLTEHGARKVEKALGGIDLYSEEHVGTTLTEVNVALHAHVLLQRDVHYIVRDDAVHLINASRGRIAQLQRWPDGLQAAVEAKEGIETTETGEVLDTITVQALINRYATVCGMTGTALAAGEQLRQFYQLGVSPIPPNKPNIREDEADRVYITTAAKNDGIVEHITEVHQRGQPVLVGTRDVAESEELHERLVRRGVPAVVLNAKNDAEEARVIAEAGKYGAVTVSTQMAGRGTDIRLGGSDEADHDRVAELGGLHVVGTGRHHTERLDNQLRGRAGRQGDPGSSVFFSSWEDDVVAANLDHNKLPMATDENGRIVSPRTGSLLDHAQRVAEGRLLDVHANTWRYNQLIAQQRAIIVERRNTLLRTVTAREELAELAPKRYEELSDKVSEERLETICRQIMLYHLDRGWADHLAYLADIRESIHLRALGRQNPLDEFHRMAVDAFASLAADAIEAAQQTFETANVLDHEPGLDLSKLARPTSTWTYMVNDNPLSDDTLSALSLPGVFR.

ATP is bound by residues glutamine 124, 142 to 146, and aspartate 535; that span reads GEGKT.

Belongs to the SecA family. In terms of assembly, monomer and homodimer. Part of the essential Sec protein translocation apparatus which comprises SecA, SecYEG and auxiliary proteins SecDF. Other proteins may also be involved.

It is found in the cell membrane. The protein localises to the cytoplasm. The catalysed reaction is ATP + H2O + cellular proteinSide 1 = ADP + phosphate + cellular proteinSide 2.. Part of the Sec protein translocase complex. Interacts with the SecYEG preprotein conducting channel. Has a central role in coupling the hydrolysis of ATP to the transfer of proteins into and across the cell membrane, serving as an ATP-driven molecular motor driving the stepwise translocation of polypeptide chains across the membrane. This chain is Protein translocase subunit SecA 2, found in Mycobacterium bovis (strain BCG / Pasteur 1173P2).